A 248-amino-acid chain; its full sequence is 2,3-bisphosphoglycerate-dependent phosphoglycerate mutase (248 aa).

Substrate contacts are provided by residues 8–15 (RHGESTWN), 21–22 (TG), arginine 60, 87–90 (ERHY), lysine 98, 114–115 (RR), and 183–184 (GN). The active-site Tele-phosphohistidine intermediate is histidine 9. Glutamate 87 acts as the Proton donor/acceptor in catalysis.

Belongs to the phosphoglycerate mutase family. BPG-dependent PGAM subfamily. As to quaternary structure, homodimer.

The catalysed reaction is (2R)-2-phosphoglycerate = (2R)-3-phosphoglycerate. The protein operates within carbohydrate degradation; glycolysis; pyruvate from D-glyceraldehyde 3-phosphate: step 3/5. Functionally, catalyzes the interconversion of 2-phosphoglycerate and 3-phosphoglycerate. The polypeptide is 2,3-bisphosphoglycerate-dependent phosphoglycerate mutase (Burkholderia lata (strain ATCC 17760 / DSM 23089 / LMG 22485 / NCIMB 9086 / R18194 / 383)).